A 342-amino-acid chain; its full sequence is Isopentenyl-diphosphate delta-isomerase (342 aa).

Residue 11 to 12 participates in substrate binding; sequence RK. FMN contacts are provided by residues Ser68, 69 to 71, Ser99, and Asn128; that span reads SMT. 99–101 contributes to the substrate binding site; that stretch reads SQR. Gln162 is a substrate binding site. Glu163 serves as a coordination point for Mg(2+). FMN is bound by residues Lys194, Ser219, Thr224, 275-277, and 296-297; these read GVR and AK.

Belongs to the IPP isomerase type 2 family. Homooctamer. Dimer of tetramers. Requires FMN as cofactor. NADPH is required as a cofactor. The cofactor is Mg(2+).

The protein localises to the cytoplasm. The catalysed reaction is isopentenyl diphosphate = dimethylallyl diphosphate. In terms of biological role, involved in the biosynthesis of isoprenoids. Catalyzes the 1,3-allylic rearrangement of the homoallylic substrate isopentenyl (IPP) to its allylic isomer, dimethylallyl diphosphate (DMAPP). The chain is Isopentenyl-diphosphate delta-isomerase from Legionella pneumophila (strain Lens).